The chain runs to 345 residues: Transcription factor MYB106 (345 aa).

2 consecutive HTH myb-type domains span residues 9–61 (KAGL…TNYL) and 62–116 (RPDI…KKRL). DNA-binding regions (H-T-H motif) lie at residues 37 to 61 (WRSL…TNYL) and 89 to 112 (WSAI…NTHL).

In terms of tissue distribution, expressed in trichomes, stems, carpels, petals and stamens.

The protein resides in the nucleus. In terms of biological role, functions as a repressor of epidermal cell outgrowth and negatively regulate trichome branch formation. Acts both as a positive and a negative regulator of cellular outgrowth. Promotes both trichome expansion and branch formation. Coordinately with WIN1/SHN1, participates in the regulation of cuticle biosynthesis and wax accumulation in reproductive organs and trichomes. Functions in cuticle nanoridge formation in petals and stamens, and in morphogenesis of petal conical cells and trichomes. May play a role in the regulation of cuticle formation in vegetative organs. In Arabidopsis thaliana (Mouse-ear cress), this protein is Transcription factor MYB106.